The following is a 100-amino-acid chain: Large ribosomal subunit protein uL23 (100 aa).

The protein belongs to the universal ribosomal protein uL23 family. As to quaternary structure, part of the 50S ribosomal subunit. Contacts protein L29, and trigger factor when it is bound to the ribosome.

One of the early assembly proteins it binds 23S rRNA. One of the proteins that surrounds the polypeptide exit tunnel on the outside of the ribosome. Forms the main docking site for trigger factor binding to the ribosome. The sequence is that of Large ribosomal subunit protein uL23 from Prochlorococcus marinus (strain MIT 9215).